A 41-amino-acid polypeptide reads, in one-letter code: uncharacterized protein (41 aa).

The segment at 1 to 41 (MGKKHRNRITGQKKNNHIPEKDIIAAEEAHGKEYSAAKRKP) is disordered. Over residues 17-41 (HIPEKDIIAAEEAHGKEYSAAKRKP) the composition is skewed to basic and acidic residues.

This is an uncharacterized protein from Bacillus subtilis (strain 168).